The primary structure comprises 258 residues: Deoxyribose-phosphate aldolase (258 aa).

Residue D102 is the Proton donor/acceptor of the active site. The active-site Schiff-base intermediate with acetaldehyde is K165. The active-site Proton donor/acceptor is K199.

It belongs to the DeoC/FbaB aldolase family. DeoC type 2 subfamily.

It localises to the cytoplasm. The enzyme catalyses 2-deoxy-D-ribose 5-phosphate = D-glyceraldehyde 3-phosphate + acetaldehyde. Its pathway is carbohydrate degradation; 2-deoxy-D-ribose 1-phosphate degradation; D-glyceraldehyde 3-phosphate and acetaldehyde from 2-deoxy-alpha-D-ribose 1-phosphate: step 2/2. Functionally, catalyzes a reversible aldol reaction between acetaldehyde and D-glyceraldehyde 3-phosphate to generate 2-deoxy-D-ribose 5-phosphate. This is Deoxyribose-phosphate aldolase from Vibrio vulnificus (strain CMCP6).